We begin with the raw amino-acid sequence, 203 residues long: Glycerol-3-phosphate acyltransferase (203 aa).

5 helical membrane-spanning segments follow: residues 5–25 (VLGL…FGVV), 55–75 (KLGI…ILVA), 88–108 (FTVL…WLGF), 114–134 (VATG…AGAV), and 162–182 (FVAH…AALI).

Belongs to the PlsY family. As to quaternary structure, probably interacts with PlsX.

Its subcellular location is the cell inner membrane. It carries out the reaction an acyl phosphate + sn-glycerol 3-phosphate = a 1-acyl-sn-glycero-3-phosphate + phosphate. It participates in lipid metabolism; phospholipid metabolism. In terms of biological role, catalyzes the transfer of an acyl group from acyl-phosphate (acyl-PO(4)) to glycerol-3-phosphate (G3P) to form lysophosphatidic acid (LPA). This enzyme utilizes acyl-phosphate as fatty acyl donor, but not acyl-CoA or acyl-ACP. This Anaeromyxobacter sp. (strain Fw109-5) protein is Glycerol-3-phosphate acyltransferase.